We begin with the raw amino-acid sequence, 434 residues long: Histidinol dehydrogenase (434 aa).

The NAD(+) site is built by Tyr-130, Gln-188, and Asn-211. Substrate-binding residues include Ser-237, Gln-259, and His-262. Gln-259 and His-262 together coordinate Zn(2+). Catalysis depends on proton acceptor residues Glu-326 and His-327. Residues His-327, Asp-360, Glu-414, and His-419 each contribute to the substrate site. Asp-360 serves as a coordination point for Zn(2+). A Zn(2+)-binding site is contributed by His-419.

The protein belongs to the histidinol dehydrogenase family. In terms of assembly, homodimer. Zn(2+) serves as cofactor.

It catalyses the reaction L-histidinol + 2 NAD(+) + H2O = L-histidine + 2 NADH + 3 H(+). The protein operates within amino-acid biosynthesis; L-histidine biosynthesis; L-histidine from 5-phospho-alpha-D-ribose 1-diphosphate: step 9/9. In terms of biological role, catalyzes the sequential NAD-dependent oxidations of L-histidinol to L-histidinaldehyde and then to L-histidine. The protein is Histidinol dehydrogenase of Shigella flexneri.